The chain runs to 1090 residues: UPF0507 protein SCRG_01893 (1090 aa).

The VPS9 domain maps to F289–N436.

Belongs to the UPF0507 family.

The polypeptide is UPF0507 protein SCRG_01893 (Saccharomyces cerevisiae (strain RM11-1a) (Baker's yeast)).